Consider the following 147-residue polypeptide: Probable inactive ribonuclease-like protein 12 (147 aa).

The N-terminal stretch at 1 to 20 (MIIMVIIFLVLLFWENEVND) is a signal peptide.

It belongs to the pancreatic ribonuclease family.

Its subcellular location is the secreted. Functionally, does not exhibit any ribonuclease activity. The chain is Probable inactive ribonuclease-like protein 12 (RNASE12) from Homo sapiens (Human).